The following is a 320-amino-acid chain: Phosphate acyltransferase (320 aa).

The protein belongs to the PlsX family. In terms of assembly, homodimer. Probably interacts with PlsY.

Its subcellular location is the cytoplasm. It catalyses the reaction a fatty acyl-[ACP] + phosphate = an acyl phosphate + holo-[ACP]. It functions in the pathway lipid metabolism; phospholipid metabolism. Functionally, catalyzes the reversible formation of acyl-phosphate (acyl-PO(4)) from acyl-[acyl-carrier-protein] (acyl-ACP). This enzyme utilizes acyl-ACP as fatty acyl donor, but not acyl-CoA. In Chlamydia pneumoniae (Chlamydophila pneumoniae), this protein is Phosphate acyltransferase.